A 411-amino-acid polypeptide reads, in one-letter code: Anaerobic sulfatase-maturating enzyme homolog AslB (411 aa).

Residues 3-250 (QQVPTRAFHV…LVAIFDHWIK (248 aa)) enclose the Radical SAM core domain. [4Fe-4S] cluster contacts are provided by cysteine 21 and cysteine 25. Residue tyrosine 27 coordinates S-adenosyl-L-methionine. [4Fe-4S] cluster is bound at residue cysteine 28. 3 residues coordinate S-adenosyl-L-methionine: glycine 74, serine 129, and arginine 141. [4Fe-4S] cluster is bound by residues cysteine 276, cysteine 282, and cysteine 297. The active-site Proton acceptor is aspartate 298. Positions 339, 342, 348, 352, and 371 each coordinate [4Fe-4S] cluster.

It belongs to the radical SAM superfamily. Anaerobic sulfatase-maturating enzyme family. [4Fe-4S] cluster serves as cofactor.

The chain is Anaerobic sulfatase-maturating enzyme homolog AslB (aslB) from Escherichia coli (strain K12).